Here is a 485-residue protein sequence, read N- to C-terminus: Glutamyl-tRNA(Gln) amidotransferase subunit A (485 aa).

Residues Lys-79 and Ser-154 each act as charge relay system in the active site. Ser-178 serves as the catalytic Acyl-ester intermediate.

Belongs to the amidase family. GatA subfamily. Heterotrimer of A, B and C subunits.

It carries out the reaction L-glutamyl-tRNA(Gln) + L-glutamine + ATP + H2O = L-glutaminyl-tRNA(Gln) + L-glutamate + ADP + phosphate + H(+). In terms of biological role, allows the formation of correctly charged Gln-tRNA(Gln) through the transamidation of misacylated Glu-tRNA(Gln) in organisms which lack glutaminyl-tRNA synthetase. The reaction takes place in the presence of glutamine and ATP through an activated gamma-phospho-Glu-tRNA(Gln). This is Glutamyl-tRNA(Gln) amidotransferase subunit A from Clostridium botulinum (strain Loch Maree / Type A3).